The sequence spans 320 residues: GTP 3',8-cyclase (320 aa).

One can recognise a Radical SAM core domain in the interval Thr4–Ala226. Arg13 provides a ligand contact to GTP. The [4Fe-4S] cluster site is built by Cys20 and Cys24. Residue Tyr26 participates in S-adenosyl-L-methionine binding. Residue Cys27 coordinates [4Fe-4S] cluster. Arg63 contacts GTP. S-adenosyl-L-methionine is bound at residue Gly67. Thr94 is a binding site for GTP. Ser118 is an S-adenosyl-L-methionine binding site. GTP is bound at residue Lys155. Met189 contacts S-adenosyl-L-methionine. [4Fe-4S] cluster contacts are provided by Cys249 and Cys252. Arg254–Arg256 is a binding site for GTP. Cys266 is a binding site for [4Fe-4S] cluster.

This sequence belongs to the radical SAM superfamily. MoaA family. In terms of assembly, monomer and homodimer. It depends on [4Fe-4S] cluster as a cofactor.

It carries out the reaction GTP + AH2 + S-adenosyl-L-methionine = (8S)-3',8-cyclo-7,8-dihydroguanosine 5'-triphosphate + 5'-deoxyadenosine + L-methionine + A + H(+). It functions in the pathway cofactor biosynthesis; molybdopterin biosynthesis. Functionally, catalyzes the cyclization of GTP to (8S)-3',8-cyclo-7,8-dihydroguanosine 5'-triphosphate. The polypeptide is GTP 3',8-cyclase (Alkaliphilus metalliredigens (strain QYMF)).